The chain runs to 254 residues: Ribonuclease HII (254 aa).

Residues 46 to 234 enclose the RNase H type-2 domain; the sequence is KLIAGIDEVG…VWMASAPQEV (189 aa). A divalent metal cation is bound by residues D52, E53, and D144.

Belongs to the RNase HII family. It depends on Mn(2+) as a cofactor. The cofactor is Mg(2+).

It is found in the cytoplasm. The enzyme catalyses Endonucleolytic cleavage to 5'-phosphomonoester.. Functionally, endonuclease that specifically degrades the RNA of RNA-DNA hybrids. The chain is Ribonuclease HII from Koribacter versatilis (strain Ellin345).